The chain runs to 159 residues: Cytochrome c-type biogenesis protein CcmE (159 aa).

Residues 1-7 (MTRKGRR) are Cytoplasmic-facing. Residues 8-28 (LVLIGAGLGVLALAAGLILSA) traverse the membrane as a helical; Signal-anchor for type II membrane protein segment. At 29–159 (LNDTIVFFRS…AAPVQRAPGS (131 aa)) the chain is on the periplasmic side. 2 residues coordinate heme: H121 and Y125. The disordered stretch occupies residues 134-159 (LKKQGRWQEGGPAPGTAAPVQRAPGS).

It belongs to the CcmE/CycJ family.

It localises to the cell inner membrane. Heme chaperone required for the biogenesis of c-type cytochromes. Transiently binds heme delivered by CcmC and transfers the heme to apo-cytochromes in a process facilitated by CcmF and CcmH. In Xanthobacter autotrophicus (strain ATCC BAA-1158 / Py2), this protein is Cytochrome c-type biogenesis protein CcmE.